The sequence spans 426 residues: MLDSKQLRTELQVVADRLATRGFSLDVARIESLEERRKSVQTRTEQLQAERNARSKSIGQAKAKGEDIAPLMADVERMANELAEGKTELDGIQAELDAILLTIPNLPDASVPVGASEEENVEVRRWGTPATFDFEIKDHVALGEISRGLDFEAAAKLSGARFAVLRGPIARLHRALAQFMINLHTGEHGYEEHYTPYLVQAPALQGTGQLPKFEEDLFKISREGEADFYLIPTAEVSLTNLVAGEIIDAKQLPIKLVAHTPCFRSEAGASGRDTRGMIRQHQFDKVEMVQVVEPSKSMEALEGLTANAERVLQLLELPYRVLALCTGDMGFGAVKTYDLEVWVPSQDKYREISSCSNCGDFQARRMQARWRNPETGKPELVHTLNGSGLAVGRTLVAVLENYQQADGSIRVPEVLKPYMGGVEVIR.

A disordered region spans residues 37–63 (RKSVQTRTEQLQAERNARSKSIGQAKA). 233–235 (TAE) provides a ligand contact to L-serine. 264–266 (RSE) provides a ligand contact to ATP. L-serine is bound at residue Glu-287. 351–354 (EISS) is an ATP binding site. Position 387 (Ser-387) interacts with L-serine.

The protein belongs to the class-II aminoacyl-tRNA synthetase family. Type-1 seryl-tRNA synthetase subfamily. Homodimer. The tRNA molecule binds across the dimer.

It is found in the cytoplasm. The catalysed reaction is tRNA(Ser) + L-serine + ATP = L-seryl-tRNA(Ser) + AMP + diphosphate + H(+). The enzyme catalyses tRNA(Sec) + L-serine + ATP = L-seryl-tRNA(Sec) + AMP + diphosphate + H(+). It functions in the pathway aminoacyl-tRNA biosynthesis; selenocysteinyl-tRNA(Sec) biosynthesis; L-seryl-tRNA(Sec) from L-serine and tRNA(Sec): step 1/1. Catalyzes the attachment of serine to tRNA(Ser). Is also able to aminoacylate tRNA(Sec) with serine, to form the misacylated tRNA L-seryl-tRNA(Sec), which will be further converted into selenocysteinyl-tRNA(Sec). The polypeptide is Serine--tRNA ligase (Pseudomonas entomophila (strain L48)).